The chain runs to 634 residues: 1-deoxy-D-xylulose-5-phosphate synthase (634 aa).

Residues His-73 and 114–116 (GHS) each bind thiamine diphosphate. A Mg(2+)-binding site is contributed by Asp-145. Thiamine diphosphate contacts are provided by residues 146-147 (GA), Asn-174, Tyr-285, and Glu-365. Asn-174 contributes to the Mg(2+) binding site.

It belongs to the transketolase family. DXPS subfamily. In terms of assembly, homodimer. Requires Mg(2+) as cofactor. Thiamine diphosphate serves as cofactor.

The catalysed reaction is D-glyceraldehyde 3-phosphate + pyruvate + H(+) = 1-deoxy-D-xylulose 5-phosphate + CO2. The protein operates within metabolic intermediate biosynthesis; 1-deoxy-D-xylulose 5-phosphate biosynthesis; 1-deoxy-D-xylulose 5-phosphate from D-glyceraldehyde 3-phosphate and pyruvate: step 1/1. Catalyzes the acyloin condensation reaction between C atoms 2 and 3 of pyruvate and glyceraldehyde 3-phosphate to yield 1-deoxy-D-xylulose-5-phosphate (DXP). This is 1-deoxy-D-xylulose-5-phosphate synthase from Desulforudis audaxviator (strain MP104C).